The primary structure comprises 307 residues: Mitochondrial glycine transporter (307 aa).

Solcar repeat units lie at residues 8 to 87, 115 to 199, and 221 to 305; these read PRNS…MRSS, LTMY…SKQL, and TSTT…LVKR. 6 consecutive transmembrane segments (helical) span residues 14-39, 62-88, 121-146, 174-197, 225-251, and 280-298; these read LIGG…TRIQ, GTLP…RSSL, LLTG…VRYE, GFGA…EKSK, VNTT…KTRM, and GLSM…AWGI.

Belongs to the mitochondrial carrier (TC 2.A.29) family. SLC25A38 subfamily.

Its subcellular location is the mitochondrion. The protein resides in the mitochondrion inner membrane. It catalyses the reaction glycine(in) = glycine(out). Functionally, mitochondrial glycine transporter that imports glycine into the mitochondrial matrix. Plays an important role in providing glycine for the first enzymatic step in heme biosynthesis, the condensation of glycine with succinyl-CoA to produce 5-aminolevulinate (ALA) in the mitochondrial matrix. This is Mitochondrial glycine transporter from Saccharomyces cerevisiae (strain ATCC 204508 / S288c) (Baker's yeast).